Consider the following 830-residue polypeptide: C-Jun-amino-terminal kinase-interacting protein 2 (830 aa).

5 disordered regions span residues 1-26, 44-354, 367-438, 452-504, and 539-574; these read MADRAEMFSLSTFHSLSPPGCRPPQD, CGLG…ADSP, EGSS…PGPC, LWAT…GSTA, and GNDSEEDSSCEASEEEAGATLLGSDQVPEDASPDSP. Positions 77-105 are enriched in acidic residues; that stretch reads DFQEFEMIDDNEEEDDEEEEEEEEEEEDG. The interval 111–278 is JNK-binding domain (JBD); that stretch reads AGGGPGSQAL…RMISSISETE (168 aa). Polar residues predominate over residues 142–172; sequence LHLTTLGAQDSLNNNNGGFTSAPPSSWQETV. 2 stretches are compositionally biased toward low complexity: residues 176 to 190 and 218 to 227; these read PAQEPLKELPAPLLP and ASSGGASPSS. Basic and acidic residues predominate over residues 233–249; sequence ADLRSHSSGGHEGRRSS. A necessary for interaction with FGF13 region spans residues 242-504; the sequence is GHEGRRSSQE…PGSRTTGSTA (263 aa). Phosphoserine occurs at positions 257, 304, and 307. Low complexity predominate over residues 271–307; that stretch reads ISSISETELELSSDGGSSSGRSSHLTNSIEEASSPAS. The segment covering 333 to 352 has biased composition (acidic residues); that stretch reads TNSEYESGSESEPDLSEDAD. The span at 427-437 shows a compositional bias: low complexity; sequence APRLGPAQPGP. Acidic residues-rich tracts occupy residues 471-490 and 541-555; these read SEEEEEDEEEDEEDEEDAED and DSEEDSSCEASEEEA. The SH3 domain maps to 610-671; sequence EREQTHRAVF…PAFYAHAVPG (62 aa). The PID domain maps to 683–819; sequence PCWVDRFDVQ…FLEYYQEHLA (137 aa).

It belongs to the JIP scaffold family. Forms homo- or heterooligomeric complexes. Binds specific components of the JNK signaling pathway namely JNK1, JNK2, JNK3, MAP2K7, MAP3K10, MAP3K11, MAP3K12 and MAPK13. Also binds the proline-rich domain-containing splice variant of apolipoprotein E receptor 2 (ApoER2). Binds the TPR motif-containing C-terminal of kinesin light chain. Binds the cytoplasmic tails of LRP1 and LRP2 (Megalin). Interacts with DCLK2. Interacts with FGF13; enables the interaction with MAPK13 and may regulate the MAPK8IP2 scaffolding activity. Interacts with TIAM1 and TIAM2. Interacts with SH3RF2. In terms of tissue distribution, highly expressed in brain. Expressed in all neurons. Also expressed in testis, primarily in the epididymal epidermis.

The protein resides in the cytoplasm. Functionally, the JNK-interacting protein (JIP) group of scaffold proteins selectively mediates JNK signaling by aggregating specific components of the MAPK cascade to form a functional JNK signaling module. JIP2 inhibits IL1 beta-induced apoptosis in insulin-secreting cells. The polypeptide is C-Jun-amino-terminal kinase-interacting protein 2 (Mapk8ip2) (Mus musculus (Mouse)).